Consider the following 837-residue polypeptide: Protein kintoun (837 aa).

Disordered stretches follow at residues 100-119 (APSS…GSHW), 205-224 (LPGV…LPDF), 230-249 (YPAA…LQPA), and 363-515 (AAAP…GPGT). Residues 233 to 242 (APGPRAPSPP) show a composition bias toward pro residues. The segment covering 428 to 442 (GEERVPKPGEQDLSR) has biased composition (basic and acidic residues). The segment covering 445 to 459 (GSPPGSVEEPSPGGE) has biased composition (low complexity). Serine 461 and serine 467 each carry phosphoserine. The span at 484 to 498 (ESARGDSSVETREES) shows a compositional bias: basic and acidic residues. Phosphoserine is present on residues serine 640, serine 641, and serine 773.

It belongs to the PIH1 family. Kintoun subfamily. As to quaternary structure, interacts with CFAP300. Interacts with DNAAF4. Interacts with DNAAF6/PIH1D3. Interacts with DNAI2 and HSPA1A.

The protein localises to the cytoplasm. It localises to the dynein axonemal particle. Functionally, required for cytoplasmic pre-assembly of axonemal dyneins, thereby playing a central role in motility in cilia and flagella. Involved in pre-assembly of dynein arm complexes in the cytoplasm before intraflagellar transport loads them for the ciliary compartment. This Homo sapiens (Human) protein is Protein kintoun.